We begin with the raw amino-acid sequence, 212 residues long: NAD(P)H-quinone oxidoreductase subunit K, chloroplastic (212 aa).

C43, C44, C108, and C139 together coordinate [4Fe-4S] cluster.

Belongs to the complex I 20 kDa subunit family. In terms of assembly, NDH is composed of at least 16 different subunits, 5 of which are encoded in the nucleus. It depends on [4Fe-4S] cluster as a cofactor.

It is found in the plastid. It localises to the chloroplast thylakoid membrane. It carries out the reaction a plastoquinone + NADH + (n+1) H(+)(in) = a plastoquinol + NAD(+) + n H(+)(out). The catalysed reaction is a plastoquinone + NADPH + (n+1) H(+)(in) = a plastoquinol + NADP(+) + n H(+)(out). In terms of biological role, NDH shuttles electrons from NAD(P)H:plastoquinone, via FMN and iron-sulfur (Fe-S) centers, to quinones in the photosynthetic chain and possibly in a chloroplast respiratory chain. The immediate electron acceptor for the enzyme in this species is believed to be plastoquinone. Couples the redox reaction to proton translocation, and thus conserves the redox energy in a proton gradient. The polypeptide is NAD(P)H-quinone oxidoreductase subunit K, chloroplastic (Phaseolus vulgaris (Kidney bean)).